Consider the following 615-residue polypeptide: MPMTDAFQVRVPRVSSSTAGDIAASSITTRGALPRPGGMPVSMSRGTSPEVALIGVYEISKILTAPRRLEVTLANVVNVLSSMLQMRHGMICILDSEGDPDMVATTGWTPEMAGQIRAHVPQKAIDQIVATQMPLVVQDVTADPLFAGHEDLFGPPEEATVSFIGVPIKADHHVMGTLSIDRIWDGTARFRFDEDVRFLTMVANLVGQTVRLHKLVASDRDRLIAQTHRLEKALREEKSGAEPEVAEAANGSAMGIVGDSPLVKRLIATAQVVARSNSTVLLRGESGTGKELFARAIHELSPRKGKPFVKVNCAALPESVLESELFGHEKGAFTGALNMRQGRFELAHGGTLFLDEIGEITPAFQAKLLRVLQEGEFERVGGNRTLKVDVRLVCATNKNLEEAVSKGEFRADLYYRIHVVPLILPPLRERPGDIPKLAKNFLDRFNKENKLHMMLSAPAIDVLRRCYFPGNVRELENCIRRTATLAHDAVITPHDFACDSGQCLSAMLWKGSAPKPVMPHVPPAPTPLTPLSPAPLATAAPAAASPAPAADSLPVTCPGTEACPAVPPRQSEKEQLLQAMERSGWVQAKAARLLNLTPRQVGYALRKYDIDIKRF.

In terms of domain architecture, GAF spans 68 to 210 (RLEVTLANVV…MVANLVGQTV (143 aa)). In terms of domain architecture, Sigma-54 factor interaction spans 256–484 (IVGDSPLVKR…LENCIRRTAT (229 aa)). ATP contacts are provided by residues 284–291 (GESGTGKE) and 347–356 (AHGGTLFLDE). Residues 485 to 572 (LAHDAVITPH…CPAVPPRQSE (88 aa)) are inter-domain linker. Positions 498 and 503 each coordinate a divalent metal cation. Residues 573 to 615 (KEQLLQAMERSGWVQAKAARLLNLTPRQVGYALRKYDIDIKRF) form a C-terminal DNA-binding domain region. A DNA-binding region (H-T-H motif) is located at residues 587 to 606 (QAKAARLLNLTPRQVGYALR).

Interacts with sigma-54.

Functionally, required for activation of most nif operons, which are directly involved in nitrogen fixation. The sequence is that of Nif-specific regulatory protein (nifA) from Azorhizobium caulinodans (strain ATCC 43989 / DSM 5975 / JCM 20966 / LMG 6465 / NBRC 14845 / NCIMB 13405 / ORS 571).